The chain runs to 272 residues: Undecaprenyl-diphosphatase (272 aa).

8 consecutive transmembrane segments (helical) span residues 4 to 24, 43 to 63, 86 to 106, 109 to 129, 145 to 165, 186 to 206, 222 to 242, and 249 to 269; these read FEVI…FLPI, GGRV…CWLY, ISVL…VDFI, VLFS…IIFW, ITFK…IPGT, TEFS…FDLI, VGFV…VLFV, and VFAW…MFFN.

Belongs to the UppP family.

It localises to the cell inner membrane. It carries out the reaction di-trans,octa-cis-undecaprenyl diphosphate + H2O = di-trans,octa-cis-undecaprenyl phosphate + phosphate + H(+). Its function is as follows. Catalyzes the dephosphorylation of undecaprenyl diphosphate (UPP). Confers resistance to bacitracin. This chain is Undecaprenyl-diphosphatase, found in Acinetobacter baumannii (strain AB307-0294).